Reading from the N-terminus, the 770-residue chain is Probable methyltransferase PMT25 (770 aa).

The Cytoplasmic segment spans residues 1-17; that stretch reads MAMGKYSRVDGKKSSSY. Residues 18–38 traverse the membrane as a helical; Signal-anchor for type II membrane protein segment; sequence GLTITIVLLLSLCLVGTWMFM. Over 39-770 the chain is Lumenal; sequence SSWSAPADSA…ETETIKSAIA (732 aa). The disordered stretch occupies residues 44–238; that stretch reads PADSAGYSST…SSISKDQSSY (195 aa). Residues 55–79 show a composition bias toward basic and acidic residues; sequence TAKDVSKNDLRKEEGDRDPKNFSDE. N-linked (GlcNAc...) asparagine glycosylation is found at N75 and N107. Polar residues predominate over residues 92–109; it reads QVKTDSENSAEGNQVNES. Composition is skewed to basic and acidic residues over residues 110-124 and 131-177; these read SGEK…KESD and DGEK…KAEE. Residues N163 and N178 are each glycosylated (N-linked (GlcNAc...) asparagine). Polar residues-rich tracts occupy residues 205 to 220 and 227 to 238; these read ESST…LVES and QQSSISKDQSSY. N-linked (GlcNAc...) asparagine glycosylation is found at N244 and N363.

The protein belongs to the methyltransferase superfamily.

It is found in the golgi apparatus membrane. The polypeptide is Probable methyltransferase PMT25 (Arabidopsis thaliana (Mouse-ear cress)).